The primary structure comprises 219 residues: Ribose-5-phosphate isomerase A (219 aa).

Residues 28-31 (TGST), 81-84 (DGAD), and 94-97 (KGGG) each bind substrate. E103 (proton acceptor) is an active-site residue. K121 provides a ligand contact to substrate.

The protein belongs to the ribose 5-phosphate isomerase family. Homodimer.

The catalysed reaction is aldehydo-D-ribose 5-phosphate = D-ribulose 5-phosphate. It functions in the pathway carbohydrate degradation; pentose phosphate pathway; D-ribose 5-phosphate from D-ribulose 5-phosphate (non-oxidative stage): step 1/1. Its function is as follows. Catalyzes the reversible conversion of ribose-5-phosphate to ribulose 5-phosphate. This Enterobacter cloacae protein is Ribose-5-phosphate isomerase A.